We begin with the raw amino-acid sequence, 93 residues long: Small ribosomal subunit protein bS20 (93 aa).

The protein belongs to the bacterial ribosomal protein bS20 family.

Functionally, binds directly to 16S ribosomal RNA. This Dictyoglomus thermophilum (strain ATCC 35947 / DSM 3960 / H-6-12) protein is Small ribosomal subunit protein bS20.